The sequence spans 164 residues: Phosphopantetheine adenylyltransferase (164 aa).

Ser-9 serves as a coordination point for substrate. ATP contacts are provided by residues 9 to 10 (SF) and His-17. Lys-41, Leu-74, and Arg-88 together coordinate substrate. Residues 89–91 (GIR), Glu-99, and 124–130 (YAEVSST) each bind ATP.

The protein belongs to the bacterial CoaD family. Homohexamer. The cofactor is Mg(2+).

Its subcellular location is the cytoplasm. It carries out the reaction (R)-4'-phosphopantetheine + ATP + H(+) = 3'-dephospho-CoA + diphosphate. It participates in cofactor biosynthesis; coenzyme A biosynthesis; CoA from (R)-pantothenate: step 4/5. Functionally, reversibly transfers an adenylyl group from ATP to 4'-phosphopantetheine, yielding dephospho-CoA (dPCoA) and pyrophosphate. In Chromobacterium violaceum (strain ATCC 12472 / DSM 30191 / JCM 1249 / CCUG 213 / NBRC 12614 / NCIMB 9131 / NCTC 9757 / MK), this protein is Phosphopantetheine adenylyltransferase.